The primary structure comprises 313 residues: Ketimine reductase mu-crystallin (313 aa).

Residue Arg-47 coordinates 3,3',5-triiodo-L-thyronine. NADPH is bound by residues Ser-90, His-91, Arg-118, Ala-143, Val-145, Gln-146, Asn-167, Arg-168, Thr-169, Asn-172, Thr-204, Met-205, and Val-225. 3,3',5-triiodo-L-thyronine is bound at residue Glu-256. Position 291 (Ser-291) interacts with NADPH.

This sequence belongs to the ornithine cyclodeaminase/mu-crystallin family. As to quaternary structure, homodimer. Binds the thyroid hormone triiodothyronine (T3); T3 binding inhibits enzymatic activity.

It localises to the cytoplasm. It catalyses the reaction L-pipecolate + NADP(+) = Delta(1)-piperideine-2-carboxylate + NADPH + H(+). It carries out the reaction L-pipecolate + NAD(+) = Delta(1)-piperideine-2-carboxylate + NADH + H(+). The enzyme catalyses L-proline + NADP(+) = 1-pyrroline-2-carboxylate + NADPH + H(+). The catalysed reaction is L-proline + NAD(+) = 1-pyrroline-2-carboxylate + NADH + H(+). It catalyses the reaction (3R)-1,4-thiomorpholine-3-carboxylate + NAD(+) = 3,4-dehydrothiomorpholine-3-carboxylate + NADH + 2 H(+). It carries out the reaction (3R)-1,4-thiomorpholine-3-carboxylate + NADP(+) = 3,4-dehydrothiomorpholine-3-carboxylate + NADPH + 2 H(+). The enzyme catalyses (S)-cystathionine ketimine + NADH + 2 H(+) = (3R,5S)-2,3,5,6,7-pentahydro-1,4-thiazepine-3,5-dicarboxylate + NAD(+). The catalysed reaction is (S)-cystathionine ketimine + NADPH + 2 H(+) = (3R,5S)-2,3,5,6,7-pentahydro-1,4-thiazepine-3,5-dicarboxylate + NADP(+). It catalyses the reaction (R)-lanthionine ketimine + NADPH + 2 H(+) = (3R,5R)-1,4-thiomorpholine-3,5-dicarboxylate + NADP(+). It carries out the reaction Delta(2)-thiazoline-2-carboxylate + NADPH + 2 H(+) = L-thiazolidine-2-carboxylate + NADP(+). In terms of biological role, catalyzes the NAD(P)H-dependent reduction of imine double bonds of a number of cyclic ketimine substrates, including sulfur-containing cyclic ketimines. Under physiological conditions, it efficiently catalyzes delta(1)-piperideine-2-carboxylate (P2C) and delta(1)-pyrroline-2-carboxylate (Pyr2C) reduction, suggesting a central role in lysine and glutamate metabolism. Additional substrates are delta(2)-thiazoline-2-carboxylate (T2C), 3,4-dehydrothiomorpholine-3-carboxylate (AECK), and (R)-lanthionine ketimine (LK) that is reduced at very low rate compared to other substrates. Also catalyzes the NAD(P)H-dependent reduction of (S)-cystathionine ketimine (CysK). This Rattus norvegicus (Rat) protein is Ketimine reductase mu-crystallin.